Consider the following 183-residue polypeptide: Ras-related protein Rap-2a (183 aa).

Residue glycine 10–serine 17 participates in GTP binding. The short motif at tyrosine 32 to tyrosine 40 is the Effector region element. Residues aspartate 57–threonine 61 and asparagine 116–aspartate 119 contribute to the GTP site. Residues cysteine 176 and cysteine 177 are each lipidated (S-palmitoyl cysteine). Cysteine methyl ester is present on cysteine 180. The S-farnesyl cysteine moiety is linked to residue cysteine 180. A propeptide spans valine 181–leucine 183 (removed in mature form).

The protein belongs to the small GTPase superfamily. Ras family. As to quaternary structure, interacts (GTP-bound form) with RUNDC3A. Interacts with PLCE1. Interacts with ARHGAP29, SGSM1, SGSM2 and SGSM3. Interacts (GTP-bound form preferentially) with TNIK (via the CNH domain); the interaction is direct and recruits RAP2A to the E3 ubiquitin ligase NEDD4. Interacts with MINK1. Interacts (GTP-bound form preferentially) with MAP4K4. Interacts with cytoskeletal actin. Interacts with RGS14; the interaction is GTP-dependent. Post-translationally, ubiquitinated; undergoes 'Lys-63' monoubiquitination and diubiquitination by NEDD4. Multiple lysine residues are probably modified. Ubiquitination requires TNIK, prevents interaction with effectors and inactivates RAP2A. Ubiquitination by the ECS(RAB40B) complex leads to RAP2A localization to lamellipodia plasma membrane, activation, and regulation of sorting at early endosomes for recycling to the lamellipodia plasma membrane. Palmitoylated. Palmitoylation is required for association with recycling endosome membranes and activation of TNIK.

It is found in the midbody. Its subcellular location is the cell projection. The protein localises to the lamellipodium membrane. The protein resides in the golgi apparatus. It localises to the recycling endosome membrane. It is found in the lysosome. The catalysed reaction is GTP + H2O = GDP + phosphate + H(+). Activated by the guanine nucleotide-exchange factors RAPGEF3 and RAPGEF4 in a cAMP-dependent manner. Nucleotide exchange is also specifically stimulated by RAPGEF5, RASGEF1A and RASGEF1B. In terms of biological role, small GTP-binding protein which cycles between a GDP-bound inactive and a GTP-bound active form. In its active form interacts with and regulates several effectors including MAP4K4, MINK1 and TNIK. Part of a signaling complex composed of NEDD4, RAP2A and TNIK which regulates neuronal dendrite extension and arborization during development. More generally, it is part of several signaling cascades and may regulate cytoskeletal rearrangements, cell migration, cell adhesion and cell spreading. This chain is Ras-related protein Rap-2a (RAP2A), found in Sus scrofa (Pig).